The sequence spans 444 residues: L-seryl-tRNA(Sec) selenium transferase (444 aa).

Lysine 284 carries the N6-(pyridoxal phosphate)lysine modification.

It belongs to the SelA family. Pyridoxal 5'-phosphate is required as a cofactor.

It is found in the cytoplasm. The catalysed reaction is L-seryl-tRNA(Sec) + selenophosphate + H(+) = L-selenocysteinyl-tRNA(Sec) + phosphate. Its pathway is aminoacyl-tRNA biosynthesis; selenocysteinyl-tRNA(Sec) biosynthesis; selenocysteinyl-tRNA(Sec) from L-seryl-tRNA(Sec) (bacterial route): step 1/1. Converts seryl-tRNA(Sec) to selenocysteinyl-tRNA(Sec) required for selenoprotein biosynthesis. The protein is L-seryl-tRNA(Sec) selenium transferase of Wolinella succinogenes (strain ATCC 29543 / DSM 1740 / CCUG 13145 / JCM 31913 / LMG 7466 / NCTC 11488 / FDC 602W) (Vibrio succinogenes).